The following is a 311-amino-acid chain: tRNA-cytidine(32) 2-sulfurtransferase (311 aa).

The short motif at 47–52 is the PP-loop motif element; the sequence is SGGKDS. 3 residues coordinate [4Fe-4S] cluster: Cys-122, Cys-125, and Cys-213.

This sequence belongs to the TtcA family. In terms of assembly, homodimer. The cofactor is Mg(2+). It depends on [4Fe-4S] cluster as a cofactor.

It localises to the cytoplasm. It catalyses the reaction cytidine(32) in tRNA + S-sulfanyl-L-cysteinyl-[cysteine desulfurase] + AH2 + ATP = 2-thiocytidine(32) in tRNA + L-cysteinyl-[cysteine desulfurase] + A + AMP + diphosphate + H(+). It functions in the pathway tRNA modification. In terms of biological role, catalyzes the ATP-dependent 2-thiolation of cytidine in position 32 of tRNA, to form 2-thiocytidine (s(2)C32). The sulfur atoms are provided by the cysteine/cysteine desulfurase (IscS) system. The protein is tRNA-cytidine(32) 2-sulfurtransferase of Klebsiella pneumoniae (strain 342).